We begin with the raw amino-acid sequence, 181 residues long: ADP-ribosylation factor 1 (181 aa).

N-acetylglycine; alternate is present on Gly-2. Gly-2 is lipidated: N-myristoyl glycine; alternate. The segment at Asn-3–Lys-16 is important for the stable binding to the membranes. Residues Gly-24–Thr-32, Asn-126–Asp-129, and Ala-160 each bind GTP.

The protein belongs to the small GTPase superfamily. Arf family. As to quaternary structure, interacts (when activated) with GGA1, GGA2 and GGA3; the interaction is required for proper subcellular location of GGA1, GGA2 and GGA3. Interacts with ARHGAP21, ASAP2, GGA1, HERC1, PRKCABP, PIP5K1B, TMED2, PSCD2, TMED10 and GRIA2. Interacts with ARFGAP1, which hydrolyzes GTP and thus, regulates its function. Interacts with PI4KB in the Golgi complex. Interacts with NCS1/FREQ in the Golgi and at the plasma membrane. Interacts with PLEKHA3. Interacts with PLEKHA8; the interaction, together with phosphatidylinositol 4-phosphate binding, is required for FAPP2-mediated glucosylceramide transfer activity. Interacts (activated) with PICK1 (via PDZ domain); the interaction blocks Arp2/3 complex inhibition. Interacts with IQSEC1. Interacts with C9orf72.

It localises to the golgi apparatus membrane. It is found in the synapse. The protein resides in the synaptosome. Its subcellular location is the postsynaptic density. The enzyme catalyses GTP + H2O = GDP + phosphate + H(+). With respect to regulation, alternates between an inactive GDP-bound form and an active GTP-bound form. Activated by guanine nucleotide-exchange factors (GEFs) and inactivated by GTPase-activating proteins (GAPs). Its function is as follows. Small GTPase involved in protein trafficking between different compartments. Modulates vesicle budding and uncoating within the Golgi complex. In its GTP-bound form, triggers the recruitment of coatomer proteins to the Golgi membrane. The hydrolysis of ARF1-bound GTP, which is mediated by ARFGAPs proteins, is required for dissociation of coat proteins from Golgi membranes and vesicles. The GTP-bound form interacts with PICK1 to limit PICK1-mediated inhibition of Arp2/3 complex activity; the function is linked to AMPA receptor (AMPAR) trafficking, regulation of synaptic plasticity of excitatory synapses and spine shrinkage during long-term depression (LTD). Plays a key role in the regulation of intestinal stem cells and gut microbiota, and is essential for maintaining intestinal homeostasis. Also plays a critical role in mast cell expansion but not in mast cell maturation by facilitating optimal mTORC1 activation. The polypeptide is ADP-ribosylation factor 1 (ARF1) (Bos taurus (Bovine)).